Consider the following 434-residue polypeptide: Histidinol dehydrogenase (434 aa).

Residues tyrosine 130, glutamine 188, and asparagine 211 each coordinate NAD(+). Substrate-binding residues include serine 237, glutamine 259, and histidine 262. The Zn(2+) site is built by glutamine 259 and histidine 262. Active-site proton acceptor residues include glutamate 326 and histidine 327. Substrate-binding residues include histidine 327, aspartate 360, glutamate 414, and histidine 419. Aspartate 360 is a binding site for Zn(2+). A Zn(2+)-binding site is contributed by histidine 419.

It belongs to the histidinol dehydrogenase family. In terms of assembly, homodimer. Requires Zn(2+) as cofactor.

The catalysed reaction is L-histidinol + 2 NAD(+) + H2O = L-histidine + 2 NADH + 3 H(+). It participates in amino-acid biosynthesis; L-histidine biosynthesis; L-histidine from 5-phospho-alpha-D-ribose 1-diphosphate: step 9/9. In terms of biological role, catalyzes the sequential NAD-dependent oxidations of L-histidinol to L-histidinaldehyde and then to L-histidine. The polypeptide is Histidinol dehydrogenase (Salmonella paratyphi A (strain ATCC 9150 / SARB42)).